Consider the following 85-residue polypeptide: Sugar transporter SemiSWEET (85 aa).

The region spanning 2-59 (ENLIGYVAAFLTTVSFLPQVLRVVMTKQTRDISRNMYIMFFLGVVLWFVYGILRSDLP) is the PQ-loop domain. 3 helical membrane passes run 5–25 (IGYV…LRVV), 33–53 (ISRN…VYGI), and 57–77 (DLPI…ILYY).

Homodimer.

The protein localises to the cell membrane. Functionally, the homodimer mediates transmembrane sugar transport down a concentration gradient. Transport is probably effected by rocking-type movements, where a cargo-binding cavity opens first on one and then on the other side of the membrane. The chain is Sugar transporter SemiSWEET from Leptospira biflexa serovar Patoc (strain Patoc 1 / ATCC 23582 / Paris).